A 288-amino-acid chain; its full sequence is Elongation factor Ts (288 aa).

Positions 79–82 (TDFV) are involved in Mg(2+) ion dislocation from EF-Tu.

Belongs to the EF-Ts family.

The protein localises to the cytoplasm. Functionally, associates with the EF-Tu.GDP complex and induces the exchange of GDP to GTP. It remains bound to the aminoacyl-tRNA.EF-Tu.GTP complex up to the GTP hydrolysis stage on the ribosome. The polypeptide is Elongation factor Ts (Ehrlichia canis (strain Jake)).